Consider the following 511-residue polypeptide: Phosphomethylpyrimidine synthase (511 aa).

Substrate contacts are provided by residues Asn-127, Met-156, Tyr-185, His-221, 241 to 243 (SRG), 282 to 285 (DGLR), and Glu-321. His-325 contributes to the Zn(2+) binding site. Tyr-348 serves as a coordination point for substrate. His-389 provides a ligand contact to Zn(2+). Positions 469, 472, and 477 each coordinate [4Fe-4S] cluster. The disordered stretch occupies residues 492–511 (KGMEEKSEVTICNRKKESGK).

It belongs to the ThiC family. The cofactor is [4Fe-4S] cluster.

The enzyme catalyses 5-amino-1-(5-phospho-beta-D-ribosyl)imidazole + S-adenosyl-L-methionine = 4-amino-2-methyl-5-(phosphooxymethyl)pyrimidine + CO + 5'-deoxyadenosine + formate + L-methionine + 3 H(+). It participates in cofactor biosynthesis; thiamine diphosphate biosynthesis. Functionally, catalyzes the synthesis of the hydroxymethylpyrimidine phosphate (HMP-P) moiety of thiamine from aminoimidazole ribotide (AIR) in a radical S-adenosyl-L-methionine (SAM)-dependent reaction. This Leptospira borgpetersenii serovar Hardjo-bovis (strain JB197) protein is Phosphomethylpyrimidine synthase.